Reading from the N-terminus, the 370-residue chain is Glutamate 5-kinase (370 aa).

Lys17 contacts ATP. Substrate contacts are provided by Ser57, Asp144, and Asn156. ATP-binding positions include 176–177 (SD) and 220–226 (TGGMASK). In terms of domain architecture, PUA spans 282 to 360 (AGALTLDDGA…HELPVEMRRP (79 aa)).

This sequence belongs to the glutamate 5-kinase family.

Its subcellular location is the cytoplasm. It carries out the reaction L-glutamate + ATP = L-glutamyl 5-phosphate + ADP. It participates in amino-acid biosynthesis; L-proline biosynthesis; L-glutamate 5-semialdehyde from L-glutamate: step 1/2. Its function is as follows. Catalyzes the transfer of a phosphate group to glutamate to form L-glutamate 5-phosphate. The protein is Glutamate 5-kinase of Mycolicibacterium smegmatis (strain ATCC 700084 / mc(2)155) (Mycobacterium smegmatis).